The chain runs to 330 residues: Protein qutG (330 aa).

Mg(2+) is bound by residues Glu78, Asp100, Leu102, Asp103, and Asp251. Glu78 contributes to the substrate binding site. Substrate contacts are provided by residues 102-105 (LDGT) and Asp251.

It belongs to the inositol monophosphatase superfamily.

In terms of biological role, not known. Probably involved in quinate metabolism. The chain is Protein qutG (qutG) from Emericella nidulans (strain FGSC A4 / ATCC 38163 / CBS 112.46 / NRRL 194 / M139) (Aspergillus nidulans).